A 481-amino-acid chain; its full sequence is Zinc metalloproteinase/disintegrin (481 aa).

Positions 1-20 are cleaved as a signal peptide; sequence MIQVLLVTICLAVFPYQGSS. A propeptide spanning residues 21–190 is cleaved from the precursor; the sequence is IILESGNVDD…KASQLYLTPE (170 aa). Residues 197-392 enclose the Peptidase M12B domain; that stretch reads RYIKLAIVVD…DNPQCILNAP (196 aa). Disulfide bonds link Cys-308/Cys-387, Cys-349/Cys-371, and Cys-351/Cys-354. Residue His-333 participates in Zn(2+) binding. Glu-334 is an active-site residue. Residues His-337 and His-343 each contribute to the Zn(2+) site. The propeptide occupies 393–408; sequence LRTDTVSTPVSGNEFL. A Disintegrin domain is found at 400 to 481; it reads TPVSGNEFLE…GDCPRNPFHA (82 aa). 6 disulfide bridges follow: Cys-414-Cys-429, Cys-416-Cys-424, Cys-423-Cys-446, Cys-437-Cys-443, Cys-442-Cys-467, and Cys-455-Cys-474. The Cell attachment site signature appears at 459-461; it reads RGD.

The protein belongs to the venom metalloproteinase (M12B) family. P-II subfamily. P-IIa sub-subfamily. Monomer. The cofactor is Zn(2+). As to expression, expressed by the venom gland.

It is found in the secreted. Impairs hemostasis in the envenomed animal. In terms of biological role, disintegrin elegantin-2a-f: inhibits platelet aggregation induced by ADP, thrombin, platelet-activating factor and collagen. Acts by inhibiting fibrinogen interaction with platelet receptors GPIIb/GPIIIa (ITGA2B/ITGB3). The chain is Zinc metalloproteinase/disintegrin from Protobothrops elegans (Elegant pitviper).